The chain runs to 518 residues: T-box transcription factor TBX5 (518 aa).

The disordered stretch occupies residues 1-46 (MADTDEGFGLARTPLEPDSKDRSCDSKPESALGAPSKSPSSPQAAF). A compositionally biased stretch (basic and acidic residues) spans 15–28 (LEPDSKDRSCDSKP). Low complexity predominate over residues 34-45 (APSKSPSSPQAA). The segment at residues 58 to 238 (LHERELWLKF…NNPFAKGFRG (181 aa)) is a DNA-binding region (T-box). 2 disordered regions span residues 254–307 (EYPV…LLPP) and 330–352 (ECSSTEHPYKKPYMETSPSEEDT). Residues 269–301 (SNHSPFSSETRALSTSSNLGSQYQCENGVSGPS) are compositionally biased toward polar residues. An N6-acetyllysine modification is found at K339.

Monomer. Homodimer (via the T-box); binds DNA as homodimer. Interacts (via the T-box) with NKX2-5 (via the homeobox); this complex binds DNA. Interacts with GATA4. Interacts with KAT2A and KAT2B. Post-translationally, acetylation at Lys-339 by KAT2A and KAT2B promotes nuclear retention.

The protein resides in the nucleus. It localises to the cytoplasm. Functionally, DNA-binding protein that regulates the transcription of several genes and is involved in heart development and limb pattern formation. Binds to the core DNA motif of NPPA promoter. In Mus musculus (Mouse), this protein is T-box transcription factor TBX5 (Tbx5).